Here is an 837-residue protein sequence, read N- to C-terminus: Tuftelin-interacting protein 11 (837 aa).

Basic and acidic residues-rich tracts occupy residues 1 to 13 and 50 to 64; these read MSLS…GEGR and TYGV…DERP. 2 disordered regions span residues 1-21 and 50-136; these read MSLS…DDER and TYGV…AGGT. A required for interaction with DHX15 region spans residues 1-50; the sequence is MSLSHLYRDGEGRVDDDDDERENFEITDWDLQNEFNPNRQRHWQTKEEAT. Phosphoserine is present on residues Ser-2, Ser-59, and Ser-98. The segment covering 91–102 has biased composition (acidic residues); it reads EEAELDDSEDEE. Residues 103-116 show a composition bias toward basic and acidic residues; that stretch reads KPGKQEELPKDLGP. Position 144 is a phosphoserine (Ser-144). Residues 149–195 enclose the G-patch domain; it reads TKGIGQKLLQKMGYVPGRGLGKNAQGIINPIEAKQRKGKGAVGAYGS. Residues 183–236 form a disordered region; the sequence is QRKGKGAVGAYGSERTTQSLQDFPVVDSEEEAEEEFQKELSQWRKDPSGSKKKP. Ser-210 carries the post-translational modification Phosphoserine. Over residues 217 to 231 the composition is skewed to basic and acidic residues; the sequence is EFQKELSQWRKDPSG. The Nuclear localization signal motif lies at 700-705; it reads VKDKFN. A required for nuclear speckle localization region spans residues 710–734; it reads IMNRAVSSNVGAYMQPGARENIAYL.

It belongs to the TFP11/STIP family. In terms of assembly, identified in the spliceosome C complex. Found in the Intron Large (IL) complex, a post-mRNA release spliceosomal complex containing the excised intron, U2, U5 and U6 snRNPs, and splicing factors. Interacts with TUFT1. Interacts with DHX15; indicative for a recruitment of DHX15 to the IL complex. Interacts with GCFC2.

Its subcellular location is the cytoplasm. It is found in the nucleus. Functionally, involved in pre-mRNA splicing, specifically in spliceosome disassembly during late-stage splicing events. Intron turnover seems to proceed through reactions in two lariat-intron associated complexes termed Intron Large (IL) and Intron Small (IS). In cooperation with DHX15 seems to mediate the transition of the U2, U5 and U6 snRNP-containing IL complex to the snRNP-free IS complex leading to efficient debranching and turnover of excised introns. May play a role in the differentiation of ameloblasts and odontoblasts or in the forming of the enamel extracellular matrix. In Oryctolagus cuniculus (Rabbit), this protein is Tuftelin-interacting protein 11 (TFIP11).